The sequence spans 278 residues: Beta-lactamase-like protein str5 (278 aa).

A helical transmembrane segment spans residues 20–37; the sequence is VFVLAALLSATFAFFTHT. N-linked (GlcNAc...) asparagine glycosylation occurs at Asn-112.

This sequence belongs to the beta-lactamase family.

The protein localises to the membrane. It functions in the pathway mycotoxin biosynthesis. Functionally, beta-lactamase-like protein; part of the gene cluster that mediates the biosynthesis of strobilurin A, an antifungal polyketide that contains a key beta-methoxyacrylate toxophore that targets the complex III of the mitochondrial electron transport chain. Strobilurin biosynthesis begins with construction of benzoyl CoA by step-wise elimination of ammonia from phenylalanine by the phenylalanine ammonia-lyase str11, oxygenation by str8 and retro-Claisen reaction to form benzoic acid, which is activated to its CoA thiolester benzoyl CoA by the dedicated CoA ligase str10. Benzoyl CoA forms the starter unit for the highly reducing polyketide synthase stpks1 that produces the polyketide prestrobilutin A. The FAD-dependent oxygenase str9 then catalyzes the key oxidative rearrangement responsible for the creation of the beta-methoxyacrylate toxophore. Str9 performs epoxidation of the 2,3 olefin of prestrobilutin A, followed by Meinwald rearrangement to furnish the aldehyde intermediate. Rapid enolization of the aldehyde intermediate would give the beta-methoxyacrylate skeleton and methylations catalyzed by str2 and str3 complete the synthesis and lead to the production of strobilurin A. The short-chain dehydrogenase stl2 and the dehydrogenase str4 play a role in the shunt pathway leading to the production of bolineol. The cluster encodes no obvious halogenase gene that could be involved in production of strobilurin B, nor any obvious dimethylallyl-transferase that could be involved in the production of strobilurin G. It is possible that unknown proteins encoded in, or near, the cluster (such as str1 or stl1) may form new classes of halogenases or dimethylally-transferases, or that the responsible genes are located elsewhere on the genome. Similarly, proteins encoded by str5/str6 hydrolases appear to have no chemical role in the biosynthesis of strobilurin A. Finally, no obvious self-resistance gene is found within the cluster. This is Beta-lactamase-like protein str5 from Strobilurus tenacellus.